Consider the following 334-residue polypeptide: BTB and MATH domain-containing protein 39 (334 aa).

In terms of domain architecture, MATH spans 14-141 (IVTLVFNIYN…EGRFQIEFDL (128 aa)). A BTB domain is found at 164-229 (ADGELITDGK…LQLDSFEVSV (66 aa)).

The sequence is that of BTB and MATH domain-containing protein 39 (bath-39) from Caenorhabditis elegans.